Reading from the N-terminus, the 312-residue chain is Serine/threonine-protein phosphatase PP2A catalytic subunit (312 aa).

Mn(2+) contacts are provided by D60, H62, D88, and N120. H121 serves as the catalytic Proton donor. Mn(2+) is bound by residues H170 and H244.

Belongs to the PPP phosphatase family. PP-2A subfamily. Requires Mn(2+) as cofactor.

It localises to the cytoplasm. The catalysed reaction is O-phospho-L-seryl-[protein] + H2O = L-seryl-[protein] + phosphate. The enzyme catalyses O-phospho-L-threonyl-[protein] + H2O = L-threonyl-[protein] + phosphate. This Nicotiana tabacum (Common tobacco) protein is Serine/threonine-protein phosphatase PP2A catalytic subunit.